The following is a 291-amino-acid chain: N-acetylmannosamine kinase (291 aa).

ATP is bound by residues 5 to 12 (AIDIGGTK) and 132 to 139 (GVGGGVVS). Zn(2+)-binding residues include His-156, Cys-166, Cys-168, and Cys-173.

It belongs to the ROK (NagC/XylR) family. NanK subfamily. As to quaternary structure, homodimer.

The catalysed reaction is an N-acyl-D-mannosamine + ATP = an N-acyl-D-mannosamine 6-phosphate + ADP + H(+). The protein operates within amino-sugar metabolism; N-acetylneuraminate degradation; D-fructose 6-phosphate from N-acetylneuraminate: step 2/5. Catalyzes the phosphorylation of N-acetylmannosamine (ManNAc) to ManNAc-6-P. The sequence is that of N-acetylmannosamine kinase from Escherichia coli O127:H6 (strain E2348/69 / EPEC).